The sequence spans 510 residues: ATP synthase subunit alpha, chloroplastic (510 aa).

Position 170-177 (170-177 (GDRQTGKT)) interacts with ATP.

It belongs to the ATPase alpha/beta chains family. As to quaternary structure, F-type ATPases have 2 components, CF(1) - the catalytic core - and CF(0) - the membrane proton channel. CF(1) has five subunits: alpha(3), beta(3), gamma(1), delta(1), epsilon(1). CF(0) has four main subunits: a, b, b' and c.

It is found in the plastid. The protein localises to the chloroplast thylakoid membrane. The catalysed reaction is ATP + H2O + 4 H(+)(in) = ADP + phosphate + 5 H(+)(out). Functionally, produces ATP from ADP in the presence of a proton gradient across the membrane. The alpha chain is a regulatory subunit. The chain is ATP synthase subunit alpha, chloroplastic from Phaseolus vulgaris (Kidney bean).